The primary structure comprises 807 residues: Glycerol-3-phosphate acyltransferase (807 aa).

An HXXXXD motif motif is present at residues 305-310 (CHRSHM).

Belongs to the GPAT/DAPAT family.

The protein localises to the cell inner membrane. The enzyme catalyses sn-glycerol 3-phosphate + an acyl-CoA = a 1-acyl-sn-glycero-3-phosphate + CoA. It participates in phospholipid metabolism; CDP-diacylglycerol biosynthesis; CDP-diacylglycerol from sn-glycerol 3-phosphate: step 1/3. The sequence is that of Glycerol-3-phosphate acyltransferase from Aliivibrio fischeri (strain ATCC 700601 / ES114) (Vibrio fischeri).